The chain runs to 715 residues: L-type lectin-domain containing receptor kinase VIII.1 (715 aa).

The signal sequence occupies residues Met-1 to Thr-21. Positions Thr-22–Ser-247 are legume-lectin like. At Thr-22–Thr-317 the chain is on the extracellular side. Residues Asn-126 and Asn-195 are each glycosylated (N-linked (GlcNAc...) asparagine). Residues Gly-255 to Thr-296 form a disordered region. Residues Ser-283–Thr-296 are compositionally biased toward low complexity. Residues Ile-318–Trp-338 traverse the membrane as a helical segment. The Cytoplasmic segment spans residues Val-339–Val-715. The Protein kinase domain occupies Phe-376 to Leu-676. ATP contacts are provided by residues Ile-382–Val-390 and Lys-405. The active-site Proton acceptor is Asp-500.

It in the C-terminal section; belongs to the protein kinase superfamily. Ser/Thr protein kinase family. In the N-terminal section; belongs to the leguminous lectin family.

It localises to the cell membrane. The catalysed reaction is L-seryl-[protein] + ATP = O-phospho-L-seryl-[protein] + ADP + H(+). It carries out the reaction L-threonyl-[protein] + ATP = O-phospho-L-threonyl-[protein] + ADP + H(+). The sequence is that of L-type lectin-domain containing receptor kinase VIII.1 (LECRK81) from Arabidopsis thaliana (Mouse-ear cress).